The following is a 357-amino-acid chain: GDP-mannose transporter 2 (357 aa).

Residues 1-33 (MASARNGVSKDELLPVYERRSQRDGDISGSVKS) are Cytoplasmic-facing. Residues 34–54 (FASTIGNSASAAVLAYCLSSI) form a helical membrane-spanning segment. The Lumenal segment spans residues 55–68 (SMTLVNKYVVSGAS). The chain crosses the membrane as a helical span at residues 69–89 (WNLSFLYLAMQSFIGTVAILA). Residues 90-107 (CKKTGLIQNLALFDLKKA) lie on the Cytoplasmic side of the membrane. A helical transmembrane segment spans residues 108 to 128 (QTWLPISLLLVGMIYTGNKAL). Position 129 (glutamine 129) is a topological domain, lumenal. The helical transmembrane segment at 130-150 (FLSVPVYTIFKNLTIIVIAYG) threads the bilayer. At 151-161 (EVLMVGGGVKP) the chain is on the cytoplasmic side. Residues 162 to 181 (LALLSFGLMVLSSVVAAWAD) form a helical membrane-spanning segment. The Lumenal portion of the chain corresponds to 182–196 (IQNATTATVGASSDS). An N-linked (GlcNAc...) asparagine glycan is attached at asparagine 184. Residues 197–217 (TAAALSALNAGYAWMGTNVIF) form a helical membrane-spanning segment. Residues 218 to 236 (SASYALGMRRVIKKTNFDN) are Cytoplasmic-facing. Residues 237-257 (WDVMFYNNLLSIPILLLASVL) traverse the membrane as a helical segment. The Lumenal portion of the chain corresponds to 258–277 (AEDWSSENLQRNFPAELRQS). Residues 278–298 (LFIGILYSGVAAVFISYCTAW) traverse the membrane as a helical segment. At 299–306 (CVRATSST) the chain is on the cytoplasmic side. The chain crosses the membrane as a helical span at residues 307-327 (TYAMVGALNKLPLAVAGIVFF). The Lumenal segment spans residues 328-332 (AAPVT). The chain crosses the membrane as a helical span at residues 333-352 (FGSVSAIVLGFISGLVYARA). Over 353 to 357 (KSTGA) the chain is Cytoplasmic.

It belongs to the TPT transporter family. SLC35D subfamily. Homooligomer.

The protein localises to the golgi apparatus membrane. It is found in the cytoplasmic vesicle membrane. The protein resides in the endoplasmic reticulum membrane. Functionally, involved in the import of GDP-mannose from the cytoplasm into the Golgi lumen. This chain is GDP-mannose transporter 2 (gmt2), found in Neosartorya fischeri (strain ATCC 1020 / DSM 3700 / CBS 544.65 / FGSC A1164 / JCM 1740 / NRRL 181 / WB 181) (Aspergillus fischerianus).